Consider the following 205-residue polypeptide: MFITFEGIDGSGKTTQSELLANYFKQIHGENNVVLTREPGGTDFAEKIRGSLLKDNIDPISELLLFTSMRYEHMKELILPALKEGKTVICDRFIDSTIAYQGYGLGVDLSLIRDLHKLVEIKYPDITFILDIDVQVGLSRAKDKNKYEEMSIDFYHKIRKGFQEIAIKESNRCNVITGIADKDNNKVYSEIIDVIRKKKKGMQPL.

ATP is bound at residue glycine 7 to threonine 14.

It belongs to the thymidylate kinase family.

The enzyme catalyses dTMP + ATP = dTDP + ADP. Its function is as follows. Phosphorylation of dTMP to form dTDP in both de novo and salvage pathways of dTTP synthesis. The protein is Thymidylate kinase of Wolbachia pipientis subsp. Culex pipiens (strain wPip).